The primary structure comprises 788 residues: Phenylalanine--tRNA ligase beta subunit (788 aa).

Positions 39 to 147 (FNVSGEIITA…DPVELGVNVV (109 aa)) constitute a tRNA-binding domain. The B5 domain maps to 399 to 472 (IEPKKVMLRK…RIYGYEKVES (74 aa)). Residues Asp-450, Asp-456, Glu-459, and Glu-460 each contribute to the Mg(2+) site. One can recognise an FDX-ACB domain in the interval 694–787 (PRFPAVRRDI…AEREFGIRRR (94 aa)).

It belongs to the phenylalanyl-tRNA synthetase beta subunit family. Type 1 subfamily. As to quaternary structure, tetramer of two alpha and two beta subunits. The cofactor is Mg(2+).

The protein resides in the cytoplasm. It catalyses the reaction tRNA(Phe) + L-phenylalanine + ATP = L-phenylalanyl-tRNA(Phe) + AMP + diphosphate + H(+). The polypeptide is Phenylalanine--tRNA ligase beta subunit (pheT) (Thermotoga maritima (strain ATCC 43589 / DSM 3109 / JCM 10099 / NBRC 100826 / MSB8)).